A 123-amino-acid polypeptide reads, in one-letter code: Small ribosomal subunit protein uS12 (123 aa).

A 3-methylthioaspartic acid modification is found at Asp-89.

This sequence belongs to the universal ribosomal protein uS12 family. Part of the 30S ribosomal subunit. Contacts proteins S8 and S17. May interact with IF1 in the 30S initiation complex.

Its function is as follows. With S4 and S5 plays an important role in translational accuracy. Interacts with and stabilizes bases of the 16S rRNA that are involved in tRNA selection in the A site and with the mRNA backbone. Located at the interface of the 30S and 50S subunits, it traverses the body of the 30S subunit contacting proteins on the other side and probably holding the rRNA structure together. The combined cluster of proteins S8, S12 and S17 appears to hold together the shoulder and platform of the 30S subunit. This chain is Small ribosomal subunit protein uS12, found in Rhodopseudomonas palustris (strain BisA53).